We begin with the raw amino-acid sequence, 207 residues long: Outer-membrane lipoprotein carrier protein (207 aa).

A signal peptide spans 1–21; that stretch reads MRLFRVLLLSAVAFALSPAQA.

This sequence belongs to the LolA family. In terms of assembly, monomer.

The protein localises to the periplasm. In terms of biological role, participates in the translocation of lipoproteins from the inner membrane to the outer membrane. Only forms a complex with a lipoprotein if the residue after the N-terminal Cys is not an aspartate (The Asp acts as a targeting signal to indicate that the lipoprotein should stay in the inner membrane). The sequence is that of Outer-membrane lipoprotein carrier protein from Azotobacter vinelandii (strain DJ / ATCC BAA-1303).